Here is a 259-residue protein sequence, read N- to C-terminus: Glucosamine-6-phosphate deaminase (259 aa).

Residue D66 is the Proton acceptor; for enolization step of the active site. Residue D135 is the For ring-opening step of the active site. The active-site Proton acceptor; for ring-opening step is the H137. E142 acts as the For ring-opening step in catalysis.

Belongs to the glucosamine/galactosamine-6-phosphate isomerase family. NagB subfamily.

It catalyses the reaction alpha-D-glucosamine 6-phosphate + H2O = beta-D-fructose 6-phosphate + NH4(+). Its pathway is amino-sugar metabolism; N-acetylneuraminate degradation; D-fructose 6-phosphate from N-acetylneuraminate: step 5/5. Functionally, catalyzes the reversible isomerization-deamination of glucosamine 6-phosphate (GlcN6P) to form fructose 6-phosphate (Fru6P) and ammonium ion. The sequence is that of Glucosamine-6-phosphate deaminase from Rhodococcus opacus (strain B4).